Consider the following 113-residue polypeptide: Large ribosomal subunit protein bL20c (113 aa).

This sequence belongs to the bacterial ribosomal protein bL20 family.

The protein resides in the plastid. The protein localises to the chloroplast. Functionally, binds directly to 23S ribosomal RNA and is necessary for the in vitro assembly process of the 50S ribosomal subunit. It is not involved in the protein synthesizing functions of that subunit. The chain is Large ribosomal subunit protein bL20c from Staurastrum punctulatum (Green alga).